Reading from the N-terminus, the 1547-residue chain is ABC multidrug transporter atrF (1547 aa).

Disordered stretches follow at residues 1 to 66 (MADG…RRGA) and 85 to 123 (TRSV…IDGD). The segment covering 10 to 19 (SATSTTMETN) has biased composition (polar residues). A compositionally biased stretch (low complexity) spans 36-47 (SSSMTATSSELS). The span at 51-66 (RWGERDQGEPVSRRGA) shows a compositional bias: basic and acidic residues. The segment covering 111–123 (KAIDEEDSTIDGD) has biased composition (acidic residues). One can recognise an ABC transporter 1 domain in the interval 197-439 (IPQLRFGKQP…FVNLGFHCPE (243 aa)). N-linked (GlcNAc...) asparagine glycosylation is found at asparagine 299 and asparagine 363. 7 helical membrane passes run 552 to 572 (LYTK…LFYG), 586 to 606 (ALFF…MPAV), 635 to 655 (FPAI…MTGL), 657 to 677 (VTAS…FSIT), 698 to 718 (GIAL…QGLI), 722 to 742 (IWFG…AVLT), and 804 to 824 (FGVV…AAEF). One can recognise an ABC transporter 2 domain in the interval 892–1130 (FTWSNVEYTV…DVIKYFADRG (239 aa)). Residue asparagine 905 is glycosylated (N-linked (GlcNAc...) asparagine). Residue 928-935 (GASGAGKT) participates in ATP binding. N-linked (GlcNAc...) asparagine glycans are attached at residues asparagine 980 and asparagine 999. The next 8 helical transmembrane spans lie at 1230–1250 (FVSV…GNSI), 1260–1280 (IFLI…KFYI), 1309–1329 (IPMA…PVGF), 1334–1354 (STAG…SSWG), 1356–1376 (WICA…FFFV), 1397–1417 (YWMY…SSIF), 1491–1511 (CFGI…FFIY), and 1520–1540 (FGMG…KGVF).

The protein belongs to the ABC transporter superfamily. ABCG family. PDR (TC 3.A.1.205) subfamily.

It is found in the cell membrane. It catalyses the reaction voriconazole(in) + ATP + H2O = voriconazole(out) + ADP + phosphate + H(+). The enzyme catalyses fluconazole(in) + ATP + H2O = fluconazole(out) + ADP + phosphate + H(+). In terms of biological role, pleiotropic ABC efflux transporter involved in the basal level of azole susceptibility. Confers resistance to fluconazole and voriconazole. This is ABC multidrug transporter atrF from Aspergillus fumigatus (strain ATCC MYA-4609 / CBS 101355 / FGSC A1100 / Af293) (Neosartorya fumigata).